The chain runs to 486 residues: Glutamate--tRNA ligase 2 (486 aa).

Positions 12 to 22 (PSPTGELHIGN) match the 'HIGH' region motif. The 'KMSKS' region signature appears at 252 to 256 (KLSKR). K255 provides a ligand contact to ATP.

The protein belongs to the class-I aminoacyl-tRNA synthetase family. Glutamate--tRNA ligase type 1 subfamily. In terms of assembly, monomer.

The protein resides in the cytoplasm. The enzyme catalyses tRNA(Glu) + L-glutamate + ATP = L-glutamyl-tRNA(Glu) + AMP + diphosphate. Functionally, catalyzes the attachment of glutamate to tRNA(Glu) in a two-step reaction: glutamate is first activated by ATP to form Glu-AMP and then transferred to the acceptor end of tRNA(Glu). This is Glutamate--tRNA ligase 2 from Syntrophus aciditrophicus (strain SB).